Consider the following 1140-residue polypeptide: MSYNYVVTAQKPTAVNGCVTGHFTSAEDLNLLIAKNTRLEIYVVTAEGLRPVKEVGMYGKIAVMELFRPKGESKDLLFILTAKYNVCILEYKQSGESIDIITRAHGNVQDRIGRPSETGIIGIIDPECRMIGLRLYDGLFKVIPLDRDNKELKAFNIRLEELHVIDVKFLYGCQAPTICFVYQDPQGRHVKTYEVSLREKEFNKGPWKQENVEAEASMVIAVPEPFGGAIIIGQESITYHNGDKYLAIAPPIIKQSTIVCHNRVDPNGSRYLLGDMEGRLFMLLLEKEEQMDGTVTLKDLRVELLGETSIAECLTYLDNGVVFVGSRLGDSQLVKLNVDSNEQGSYVVAMETFTNLGPIVDMCVVDLERQGQGQLVTCSGAFKEGSLRIIRNGIGIHEHASIDLPGIKGLWPLRSDPNRETDDTLVLSFVGQTRVLMLNGEEVEETELMGFVDDQQTFFCGNVAHQQLIQITSASVRLVSQEPKALVSEWKEPQAKNISVASCNSSQVVVAVGRALYYLQIHPQELRQISHTEMEHEVACLDITPLGDSNGLSPLCAIGLWTDISARILKLPSFELLHKEMLGGEIIPRSILMTTFESSHYLLCALGDGALFYFGLNIETGLLSDRKKVTLGTQPTVLRTFRSLSTTNVFACSDRPTVIYSSNHKLVFSNVNLKEVNYMCPLNSDGYPDSLALANNSTLTIGTIDEIQKLHIRTVPLYESPRKICYQEVSQCFGVLSSRIEVQDTSGGTTALRPSASTQALSSSVSSSKLFSSSTAPHETSFGEEVEVHNLLIIDQHTFEVLHAHQFLQNEYALSLVSCKLGKDPNTYFIVGTAMVYPEEAEPKQGRIVVFQYSDGKLQTVAEKEVKGAVYPMVEFNGKLLASINSTVRLYEWTTEKELRTECNHYNNIMALYLKTKGDFILVGDLMRSVLLLAYKPMEGNFEEIARDFNPNWMSAVEILDDDNFLGAENAFNLFVCQKDSAATTDEERQHLQEVGLFHLGEFVNVFCHGSLVMQNLGETSTPTQGSVLFGTVNGMIGLVTSLSESWYNLLLDMQNRLNKVIKSVGKIEHSFWRSFHTERKTEPATGFIDGDLIESFLDISRPKMQEVVANLQYDDGSGMKREATADDLIKVVEELTRIH.

S2 bears the N-acetylserine mark. Residues 2 to 768 (SYNYVVTAQK…QALSSSVSSS (767 aa)) are interaction with CDT1. The segment at 13–356 (TAVNGCVTGH…VVAMETFTNL (344 aa)) is WD repeat beta-propeller A. The interval 391–708 (RNGIGIHEHA…LTIGTIDEIQ (318 aa)) is WD repeat beta-propeller B; Interaction with CUL4A. Positions 709-1043 (KLHIRTVPLY…NGMIGLVTSL (335 aa)) are WD repeat beta-propeller C. The interaction with CDT1 and CUL4A stretch occupies residues 771–1140 (FSSSTAPHET…KVVEELTRIH (370 aa)). K1067 is subject to N6-acetyllysine. K1121 is covalently cross-linked (Glycyl lysine isopeptide (Lys-Gly) (interchain with G-Cter in SUMO2)). The residue at position 1125 (T1125) is a Phosphothreonine.

The protein belongs to the DDB1 family. Component of the UV-DDB complex which includes DDB1 and DDB2; the heterodimer dimerizes to give rise to a heterotetramer when bound to damaged DNA. The UV-DDB complex interacts with monoubiquitinated histone H2A and binds to XPC via the DDB2 subunit. Component of numerous DCX (DDB1-CUL4-X-box) E3 ubiquitin-protein ligase complexes which consist of a core of DDB1, CUL4A or CUL4B and RBX1. DDB1 may recruit specific substrate targeting subunits to the DCX complex. These substrate targeting subunits are generally known as DCAF (DDB1- and CUL4-associated factor) or CDW (CUL4-DDB1-associated WD40-repeat) proteins. Interacts with AMBRA1, ATG16L1, BTRC, CRBN, DCAF1, DCAF4, DCAF5, DCAF6, DCAF7, DCAF8, DCAF9, DCAF10, DCAF11, DCAF12, DCAF15, DCAF16, DCAF17, DDA1, DET1, DTL, ERCC8, FBXW5, FBXW8, GRWD1, KATNB1, NLE1, NUP43, PAFAH1B1, PHIP, PWP1, RBBP4, RBBP5, RBBP7, COP1, SNRNP40, DCAF1, WDR5, WDR5B, WDR12, WDR26, WDR39, WDR42, WDR53, WDR59, WDR61, WSB1, WSB2, LRWD1 and WDTC1. DCX complexes may associate with the COP9 signalosome, and this inhibits the E3 ubiquitin-protein ligase activity of the complex. Interacts with NF2, TSC1 and TSC2. Interacts with AGO1 and AGO2. Associates with the E3 ligase complex containing DYRK2, EDD/UBR5, DDB1 and DCAF1 proteins (EDVP complex). Interacts directly with DYRK2. DCX(DTL) complex interacts with FBXO11; does not ubiquitinate and degradate FBXO11. Interacts with TRPC4AP. Interacts with CRY1 and CRY2. The DDB1-CUL4A complex interacts with CRY1. May also interact with DCUN1D1, DCUN1D2, DCUN1D3 and DCUN1D5. Component of the DCX(DCAF13) E3 ubiquitin ligase complex, at least composed of CUL4 (CUL4A or CUL4B), DDB1, DCAF13 and RBX1. Interacts with DCAF13 (via WD40 domain). Post-translationally, phosphorylated by ABL1. Ubiquitinated by CUL4A. Subsequently degraded by ubiquitin-dependent proteolysis. In terms of processing, acetylated, promoting interaction with CUL4 (CUL4A or CUL4B) and subsequent formation of DCX (DDB1-CUL4-X-box) E3 ubiquitin-protein ligase complexes. Deacetylation by SIRT7 impairs the interaction with CUL4 (CUL4A or CUL4B) and formation of DCX (DDB1-CUL4-X-box) E3 ubiquitin-protein ligase complexes.

It is found in the cytoplasm. The protein resides in the nucleus. Its pathway is protein modification; protein ubiquitination. Its function is as follows. Protein, which is both involved in DNA repair and protein ubiquitination, as part of the UV-DDB complex and DCX (DDB1-CUL4-X-box) complexes, respectively. Core component of the UV-DDB complex (UV-damaged DNA-binding protein complex), a complex that recognizes UV-induced DNA damage and recruit proteins of the nucleotide excision repair pathway (the NER pathway) to initiate DNA repair. The UV-DDB complex preferentially binds to cyclobutane pyrimidine dimers (CPD), 6-4 photoproducts (6-4 PP), apurinic sites and short mismatches. Also functions as a component of numerous distinct DCX (DDB1-CUL4-X-box) E3 ubiquitin-protein ligase complexes which mediate the ubiquitination and subsequent proteasomal degradation of target proteins. The functional specificity of the DCX E3 ubiquitin-protein ligase complex is determined by the variable substrate recognition component recruited by DDB1. DCX(DDB2) (also known as DDB1-CUL4-ROC1, CUL4-DDB-ROC1 and CUL4-DDB-RBX1) may ubiquitinate histone H2A, histone H3 and histone H4 at sites of UV-induced DNA damage. The ubiquitination of histones may facilitate their removal from the nucleosome and promote subsequent DNA repair. DCX(DDB2) also ubiquitinates XPC, which may enhance DNA-binding by XPC and promote NER. DCX(DTL) plays a role in PCNA-dependent polyubiquitination of CDT1 and MDM2-dependent ubiquitination of TP53 in response to radiation-induced DNA damage and during DNA replication. DCX(ERCC8) (the CSA complex) plays a role in transcription-coupled repair (TCR). The DDB1-CUL4A-DTL E3 ligase complex regulates the circadian clock function by mediating the ubiquitination and degradation of CRY1. DDB1-mediated CRY1 degradation promotes FOXO1 protein stability and FOXO1-mediated gluconeogenesis in the liver. By acting on TET dioxygenses, essential for oocyte maintenance at the primordial follicle stage, hence essential for female fertility. Maternal factor required for proper zygotic genome activation and genome reprogramming. The protein is DNA damage-binding protein 1 (DDB1) of Pongo abelii (Sumatran orangutan).